A 111-amino-acid chain; its full sequence is Distal membrane-arm assembly complex protein 1 (111 aa).

The span at 1–11 (MGSSFSGSTEF) shows a compositional bias: polar residues. The interval 1-40 (MGSSFSGSTEFSAPAPPTVSTAVPANPPAKSAVPASPARD) is disordered. Positions 18–38 (TVSTAVPANPPAKSAVPASPA) are enriched in low complexity. 2 helical membrane-spanning segments follow: residues 51 to 68 (VLSG…YLVA) and 81 to 101 (GTVL…VVLV).

Interacts with incompletely assembled mitochondrial NADH:ubiquinone oxidoreductase complex (complex I).

Its subcellular location is the mitochondrion inner membrane. Its function is as follows. Required for the assembly of the mitochondrial NADH:ubiquinone oxidoreductase complex (complex I). Involved in the assembly of the distal region of complex I. In Mus musculus (Mouse), this protein is Distal membrane-arm assembly complex protein 1.